Consider the following 250-residue polypeptide: Malonyl-[acyl-carrier protein] O-methyltransferase (250 aa).

It belongs to the methyltransferase superfamily.

It catalyses the reaction malonyl-[ACP] + S-adenosyl-L-methionine = malonyl-[ACP] methyl ester + S-adenosyl-L-homocysteine. Its pathway is cofactor biosynthesis; biotin biosynthesis. Converts the free carboxyl group of a malonyl-thioester to its methyl ester by transfer of a methyl group from S-adenosyl-L-methionine (SAM). It allows to synthesize pimeloyl-ACP via the fatty acid synthetic pathway. This is Malonyl-[acyl-carrier protein] O-methyltransferase from Neorickettsia risticii (strain Illinois).